We begin with the raw amino-acid sequence, 408 residues long: CinA-like protein (408 aa).

This sequence belongs to the CinA family.

In Fervidobacterium nodosum (strain ATCC 35602 / DSM 5306 / Rt17-B1), this protein is CinA-like protein.